Reading from the N-terminus, the 653-residue chain is Beta-galactosidase (653 aa).

The N-terminal stretch at 1-22 is a signal peptide; sequence MPGVVRLLALLLVPLLLGSARG. The propeptide occupies 23–27; that stretch reads LHNAT. Residue Asn25 is glycosylated (N-linked (GlcNAc...) asparagine). Tyr82 serves as a coordination point for substrate. Asn96 carries N-linked (GlcNAc...) asparagine glycosylation. 2 residues coordinate substrate: Glu128 and Asn186. The Proton donor role is filled by Glu187. Cysteines 194 and 229 form a disulfide. Asn246 carries an N-linked (GlcNAc...) asparagine glycan. Residue Glu267 is the Nucleophile of the active site. Tyr332 is a binding site for substrate. N-linked (GlcNAc...) asparagine glycans are attached at residues Asn463, Asn497, and Asn554. A disulfide bridge connects residues Cys625 and Cys633.

It belongs to the glycosyl hydrolase 35 family. In terms of assembly, homodimer. May form higher multimers.

It localises to the lysosome. The catalysed reaction is Hydrolysis of terminal non-reducing beta-D-galactose residues in beta-D-galactosides.. Functionally, cleaves beta-linked terminal galactosyl residues from gangliosides, glycoproteins, and glycosaminoglycans. In Bos taurus (Bovine), this protein is Beta-galactosidase (GLB1).